The sequence spans 571 residues: Putative F-box protein At5g39460 (571 aa).

The F-box domain occupies 9–55 (ACLLLTLPEDVFAVISRFLSPSDICNLILCGKSLCALVDSEKTWLVQ).

The chain is Putative F-box protein At5g39460 from Arabidopsis thaliana (Mouse-ear cress).